We begin with the raw amino-acid sequence, 328 residues long: Anthranilate phosphoribosyltransferase (328 aa).

5-phospho-alpha-D-ribose 1-diphosphate-binding positions include Gly-79, 82–83 (GD), Thr-87, 89–92 (NIST), 107–115 (KHGNYAVSS), and Ser-119. Residue Gly-79 coordinates anthranilate. Ser-91 serves as a coordination point for Mg(2+). Asn-110 contributes to the anthranilate binding site. Anthranilate is bound at residue Arg-165. Mg(2+) contacts are provided by Asp-223 and Glu-224.

This sequence belongs to the anthranilate phosphoribosyltransferase family. Homodimer. It depends on Mg(2+) as a cofactor.

The catalysed reaction is N-(5-phospho-beta-D-ribosyl)anthranilate + diphosphate = 5-phospho-alpha-D-ribose 1-diphosphate + anthranilate. Its pathway is amino-acid biosynthesis; L-tryptophan biosynthesis; L-tryptophan from chorismate: step 2/5. Its function is as follows. Catalyzes the transfer of the phosphoribosyl group of 5-phosphorylribose-1-pyrophosphate (PRPP) to anthranilate to yield N-(5'-phosphoribosyl)-anthranilate (PRA). This chain is Anthranilate phosphoribosyltransferase, found in Cytophaga hutchinsonii (strain ATCC 33406 / DSM 1761 / CIP 103989 / NBRC 15051 / NCIMB 9469 / D465).